Here is a 266-residue protein sequence, read N- to C-terminus: Enoyl-CoA hydratase EchA19 (266 aa).

Glu-120 is an active-site residue. Position 135 is an N6-succinyllysine (Lys-135). Glu-140 is a catalytic residue. Position 142 is an N6-succinyllysine (Lys-142).

Belongs to the enoyl-CoA hydratase/isomerase family. Homotrimer; substrate probably binds in elongated tunnels between the subunits. Post-translationally, succinylated in vitro at pH 8.1, succinylation reduces specific activity of the enzyme 5.5-fold; succinyl-CoA is a downstream by-product of cholesterol degradation. Can be de-succinylated in vitro by NAD-dependent protein deacylase (AC P9WGG3). Succinylation may be a negative feedback regulator of cholesterol metabolism.

The enzyme catalyses (22E)-3-oxochola-4,22-dien-24-oyl-CoA + H2O = (22R)-hydroxy-3-oxo-chol-4-ene-24-oyl-CoA. Its pathway is steroid metabolism; cholesterol degradation. In terms of biological role, degradation of the cholesterol side chain involves 3 multistep beta-oxidation cycles, this may be involved in the second cycle. Hydrates 3-OCDO-CoA ((22E)-3-oxo-chol-4,22-dien-24-oyl-CoA) to make (22R)-HOCO-CoA (3-oxo-chol-4-ene-(22R)-hydroxy-24-oyl-CoA). Also acts on octenoyl-CoA. Not active on (E)-3-OCDS-CoA ((E)-3-oxocholest-4,24-dien-26-oyl-CoA) or 3-OPDC-CoA (3-oxo-4,17-pregnadiene-20-carboxyl-CoA). Hydrates the same substrate as ChsH3, but the 2 enzymes make different stereoisomers of the product. In Mycobacterium tuberculosis (strain ATCC 25618 / H37Rv), this protein is Enoyl-CoA hydratase EchA19.